The following is a 59-amino-acid chain: Large ribosomal subunit protein bL32 (59 aa).

Positions 1–59 (MAVQQNKKSPSKRGMHRAHDFLTTPPLAVESTTGEAHLRHHISPAGFYRGKKVTKGKGE) are disordered. Basic residues predominate over residues 49–59 (RGKKVTKGKGE).

This sequence belongs to the bacterial ribosomal protein bL32 family.

The protein is Large ribosomal subunit protein bL32 of Dechloromonas aromatica (strain RCB).